An 81-amino-acid polypeptide reads, in one-letter code: Putative defensin-like protein 56 (81 aa).

A signal peptide spans Met1–Ser23. 4 cysteine pairs are disulfide-bonded: Cys46-Cys80, Cys50-Cys73, Cys59-Cys78, and Cys63-Cys79.

This sequence belongs to the DEFL family.

It is found in the secreted. The chain is Putative defensin-like protein 56 from Arabidopsis thaliana (Mouse-ear cress).